The sequence spans 284 residues: Tryptophan synthase alpha chain (284 aa).

Catalysis depends on proton acceptor residues E55 and D66.

It belongs to the TrpA family. In terms of assembly, tetramer of two alpha and two beta chains.

The enzyme catalyses (1S,2R)-1-C-(indol-3-yl)glycerol 3-phosphate + L-serine = D-glyceraldehyde 3-phosphate + L-tryptophan + H2O. It functions in the pathway amino-acid biosynthesis; L-tryptophan biosynthesis; L-tryptophan from chorismate: step 5/5. The alpha subunit is responsible for the aldol cleavage of indoleglycerol phosphate to indole and glyceraldehyde 3-phosphate. This is Tryptophan synthase alpha chain from Methanococcus voltae.